Reading from the N-terminus, the 362-residue chain is 3-dehydroquinate synthase (362 aa).

NAD(+) contacts are provided by residues 72 to 77, 106 to 110, 130 to 131, Lys142, and Lys151; these read SGEQAK, GVVGD, and TT. The Zn(2+) site is built by Glu184, His246, and His263.

It belongs to the sugar phosphate cyclases superfamily. Dehydroquinate synthase family. The cofactor is NAD(+). Requires Co(2+) as cofactor. Zn(2+) is required as a cofactor.

The protein localises to the cytoplasm. It catalyses the reaction 7-phospho-2-dehydro-3-deoxy-D-arabino-heptonate = 3-dehydroquinate + phosphate. It participates in metabolic intermediate biosynthesis; chorismate biosynthesis; chorismate from D-erythrose 4-phosphate and phosphoenolpyruvate: step 2/7. Its function is as follows. Catalyzes the conversion of 3-deoxy-D-arabino-heptulosonate 7-phosphate (DAHP) to dehydroquinate (DHQ). The polypeptide is 3-dehydroquinate synthase (Bacillus subtilis (strain 168)).